The chain runs to 187 residues: GTP cyclohydrolase 1 (187 aa).

Zn(2+) contacts are provided by cysteine 78, histidine 81, and cysteine 149.

The protein belongs to the GTP cyclohydrolase I family. As to quaternary structure, toroid-shaped homodecamer, composed of two pentamers of five dimers.

The catalysed reaction is GTP + H2O = 7,8-dihydroneopterin 3'-triphosphate + formate + H(+). It participates in cofactor biosynthesis; 7,8-dihydroneopterin triphosphate biosynthesis; 7,8-dihydroneopterin triphosphate from GTP: step 1/1. The polypeptide is GTP cyclohydrolase 1 (Wolinella succinogenes (strain ATCC 29543 / DSM 1740 / CCUG 13145 / JCM 31913 / LMG 7466 / NCTC 11488 / FDC 602W) (Vibrio succinogenes)).